We begin with the raw amino-acid sequence, 619 residues long: Thiohydroximate-O-sulfate sulfur/sulfate-lyase (nitrile-forming) NSP4 (619 aa).

Jacalin-type lectin domains lie at 2–142 (AQKV…YFAP) and 151–292 (AKKL…YISL). 5 Kelch repeats span residues 326–374 (KIYS…VCMV), 379–425 (TLYV…SMAA), 429–478 (NVYV…VVQG), 480–524 (VWVV…ASAA), and 528–583 (HIVI…GWTA). R386 functions as the Proton donor in the catalytic mechanism. Positions 386, 419, 441, 470, and 519 each coordinate a (Z)-N-(sulfonatooxy)alkanimidothioate. Residue R441 is the Proton donor of the active site. Fe(2+) is bound by residues E535, D539, and H543. Position 581 (W581) interacts with a (Z)-N-(sulfonatooxy)alkanimidothioate.

Belongs to the jacalin lectin family. It depends on Fe(2+) as a cofactor. Mainly expressed in roots, and, to a lower extent, in seedlings and leaves. Observed in seeds.

The enzyme catalyses a (Z)-N-(sulfonatooxy)alkanimidothioate = a nitrile + sulfur + sulfate. It catalyses the reaction (Z)-phenyl-N-(sulfonatooxy)methanimidothioate = phenylacetonitrile + sulfur + sulfate. It carries out the reaction (Z)-N-(sulfonatooxy)prop-2-enimidothioate = but-3-enenitrile + sulfur + sulfate. In terms of biological role, specifier protein that contributes to constitutive and herbivore-induced simple nitrile formation. Promotes simple nitriles, but not epithionitrile or thiocyanate formation. Converts allylglucosinolate and benzylglucosinolate (glucotropaeolin) to their corresponding simple nitriles in the presence of myrosinase. In Arabidopsis thaliana (Mouse-ear cress), this protein is Thiohydroximate-O-sulfate sulfur/sulfate-lyase (nitrile-forming) NSP4.